The chain runs to 275 residues: 3-methyl-2-oxobutanoate hydroxymethyltransferase (275 aa).

The Mg(2+) site is built by Asp44 and Asp83. 3-methyl-2-oxobutanoate contacts are provided by residues 44–45 (DS), Asp83, and Lys113. Glu115 is a Mg(2+) binding site. Glu182 (proton acceptor) is an active-site residue.

This sequence belongs to the PanB family. As to quaternary structure, homodecamer; pentamer of dimers. It depends on Mg(2+) as a cofactor.

The protein localises to the cytoplasm. The catalysed reaction is 3-methyl-2-oxobutanoate + (6R)-5,10-methylene-5,6,7,8-tetrahydrofolate + H2O = 2-dehydropantoate + (6S)-5,6,7,8-tetrahydrofolate. The protein operates within cofactor biosynthesis; (R)-pantothenate biosynthesis; (R)-pantoate from 3-methyl-2-oxobutanoate: step 1/2. In terms of biological role, catalyzes the reversible reaction in which hydroxymethyl group from 5,10-methylenetetrahydrofolate is transferred onto alpha-ketoisovalerate to form ketopantoate. This is 3-methyl-2-oxobutanoate hydroxymethyltransferase from Enterococcus faecalis (strain ATCC 700802 / V583).